Here is a 173-residue protein sequence, read N- to C-terminus: NADH-ubiquinone oxidoreductase chain 6 (173 aa).

Transmembrane regions (helical) follow at residues 12 to 32, 47 to 67, 94 to 114, and 142 to 162; these read VFWLIGVSSNISVYYGVVSLV, GSFLALVLFLIYLGGMLVIFA, VVLAVVFVLVGWGWWGVGECG, and GALMMAMFGLFLTFFIVLVLV.

Belongs to the complex I subunit 6 family.

It is found in the mitochondrion membrane. The enzyme catalyses a ubiquinone + NADH + 5 H(+)(in) = a ubiquinol + NAD(+) + 4 H(+)(out). Functionally, core subunit of the mitochondrial membrane respiratory chain NADH dehydrogenase (Complex I) that is believed to belong to the minimal assembly required for catalysis. Complex I functions in the transfer of electrons from NADH to the respiratory chain. The immediate electron acceptor for the enzyme is believed to be ubiquinone. The protein is NADH-ubiquinone oxidoreductase chain 6 (MT-ND6) of Pelomedusa subrufa (African side-necked turtle).